We begin with the raw amino-acid sequence, 218 residues long: MSDNNQLQQIAHLRREYTKGGLRRRDLPAEPLTLFERWLGQACDARLADPTAMVVATVDDKGQPYQRIVLLKHYDEKGLVFYTNLGSRKAHQIEHNPRISLLFPWHMLERQVMVTGKAERLSTLEVVRYFHSRPRDSQIGAWVSKQSSRISARGILESKFLELKQKFQQGEVPLPSFWGGFRVSIEQMEFWQGGEHRLHDRFLYQRDDGAWKIDRLAP.

Substrate-binding positions include R14–Y17 and K72. FMN-binding positions include R67–K72, Y82–T83, R88, K89, and Q111. Positions 129, 133, and 137 each coordinate substrate. FMN-binding positions include Q146–S147 and W191. Residue R197–H199 coordinates substrate. R201 contributes to the FMN binding site.

This sequence belongs to the pyridoxamine 5'-phosphate oxidase family. As to quaternary structure, homodimer. FMN serves as cofactor.

It catalyses the reaction pyridoxamine 5'-phosphate + O2 + H2O = pyridoxal 5'-phosphate + H2O2 + NH4(+). The catalysed reaction is pyridoxine 5'-phosphate + O2 = pyridoxal 5'-phosphate + H2O2. It functions in the pathway cofactor metabolism; pyridoxal 5'-phosphate salvage; pyridoxal 5'-phosphate from pyridoxamine 5'-phosphate: step 1/1. It participates in cofactor metabolism; pyridoxal 5'-phosphate salvage; pyridoxal 5'-phosphate from pyridoxine 5'-phosphate: step 1/1. Catalyzes the oxidation of either pyridoxine 5'-phosphate (PNP) or pyridoxamine 5'-phosphate (PMP) into pyridoxal 5'-phosphate (PLP). This chain is Pyridoxine/pyridoxamine 5'-phosphate oxidase, found in Salmonella typhi.